The chain runs to 333 residues: Tetraacyldisaccharide 4'-kinase (333 aa).

An ATP-binding site is contributed by 60 to 67; sequence TVGGTGKT.

This sequence belongs to the LpxK family.

The enzyme catalyses a lipid A disaccharide + ATP = a lipid IVA + ADP + H(+). The protein operates within glycolipid biosynthesis; lipid IV(A) biosynthesis; lipid IV(A) from (3R)-3-hydroxytetradecanoyl-[acyl-carrier-protein] and UDP-N-acetyl-alpha-D-glucosamine: step 6/6. In terms of biological role, transfers the gamma-phosphate of ATP to the 4'-position of a tetraacyldisaccharide 1-phosphate intermediate (termed DS-1-P) to form tetraacyldisaccharide 1,4'-bis-phosphate (lipid IVA). This is Tetraacyldisaccharide 4'-kinase from Pseudomonas putida (strain ATCC 700007 / DSM 6899 / JCM 31910 / BCRC 17059 / LMG 24140 / F1).